The primary structure comprises 145 residues: 3-dehydroquinate dehydratase (145 aa).

Residue Tyr23 is the Proton acceptor of the active site. Substrate is bound by residues Asn73, His79, and Asp86. The active-site Proton donor is His99. Substrate-binding positions include 100–101 and Arg110; that span reads LS.

The protein belongs to the type-II 3-dehydroquinase family. Homododecamer.

It catalyses the reaction 3-dehydroquinate = 3-dehydroshikimate + H2O. It participates in metabolic intermediate biosynthesis; chorismate biosynthesis; chorismate from D-erythrose 4-phosphate and phosphoenolpyruvate: step 3/7. Its function is as follows. Catalyzes a trans-dehydration via an enolate intermediate. The chain is 3-dehydroquinate dehydratase from Desulfitobacterium hafniense (strain Y51).